The sequence spans 253 residues: Tryptophan synthase alpha chain (253 aa).

Residues glutamate 48 and aspartate 59 each act as proton acceptor in the active site.

Belongs to the TrpA family. As to quaternary structure, tetramer of two alpha and two beta chains.

The catalysed reaction is (1S,2R)-1-C-(indol-3-yl)glycerol 3-phosphate + L-serine = D-glyceraldehyde 3-phosphate + L-tryptophan + H2O. The protein operates within amino-acid biosynthesis; L-tryptophan biosynthesis; L-tryptophan from chorismate: step 5/5. Functionally, the alpha subunit is responsible for the aldol cleavage of indoleglycerol phosphate to indole and glyceraldehyde 3-phosphate. This chain is Tryptophan synthase alpha chain, found in Caldicellulosiruptor saccharolyticus (strain ATCC 43494 / DSM 8903 / Tp8T 6331).